Here is a 433-residue protein sequence, read N- to C-terminus: Probable non-inhibitory serpin-Z5 (433 aa).

Positions 1 to 12 (MEPKEKKQKLDT) are enriched in basic and acidic residues. The disordered stretch occupies residues 1–43 (MEPKEKKQKLDTSEVASPSLSKTHLKKKKTKKQKIRKSQEITS). Residues 23 to 36 (THLKKKKTKKQKIR) are compositionally biased toward basic residues. The RCL stretch occupies residues 380 to 404 (GTEAVTFTAFRSAYLGCALVKPIDF).

It belongs to the serpin family. As to expression, weakly expressed during seedling development.

This is Probable non-inhibitory serpin-Z5 from Arabidopsis thaliana (Mouse-ear cress).